The chain runs to 528 residues: Ankyrin repeat and death domain-containing protein 1B (528 aa).

ANK repeat units follow at residues 67-96 (PNERSFQNAAKSNNLDLMEKLFEKKVNINV), 100-129 (MNRTALHFAVGRNHLSAVDFLLKHKARVDV), 133-162 (HGLTVIHLAAWSGSLEVMLMLVKAGADQRA), 166-197 (DGMSALHFATQSNHVRIVEYLIQDLHLKDLNQ), 201-230 (KGRKPFLLAAERGHVEMIEKLTFLNLHTSE), 234-263 (GGNTALHLAAKHGHSPAVQVLLAQWQDINE), 267-296 (LNISSLQIATRNGHASLVNFLLSENVDLHQ), 300-329 (PKESPLHLVVINNHITVVNSLLSAQHDIDI), 333-362 (KQQTPLHVAADRGNVELVETLLKAGCDLKA), and 366-395 (QGKTALAVASRSNHSLVVGMLIKAERYYAW). The Death domain occupies 427–515 (TLLWDLAYHQ…KLAEKTRHFK (89 aa)).

In Homo sapiens (Human), this protein is Ankyrin repeat and death domain-containing protein 1B (ANKDD1B).